The following is a 70-amino-acid chain: DNA-directed RNA polymerase subunit omega (70 aa).

This sequence belongs to the RNA polymerase subunit omega family. In terms of assembly, the RNAP catalytic core consists of 2 alpha, 1 beta, 1 beta' and 1 omega subunit. When a sigma factor is associated with the core the holoenzyme is formed, which can initiate transcription.

It catalyses the reaction RNA(n) + a ribonucleoside 5'-triphosphate = RNA(n+1) + diphosphate. Functionally, promotes RNA polymerase assembly. Latches the N- and C-terminal regions of the beta' subunit thereby facilitating its interaction with the beta and alpha subunits. The polypeptide is DNA-directed RNA polymerase subunit omega (Bacillus cereus (strain G9842)).